The sequence spans 566 residues: Membrane protein insertase YidC (566 aa).

Residues 7–27 (ILIVALAIVSYVMVLKWNQDY) form a helical membrane-spanning segment. Positions 38-72 (ASSTTAPGLPDAPTGTSAANDDIPRAASDTTAPAE) are disordered. Transmembrane regions (helical) follow at residues 347-367 (LELT…FWLL), 373-393 (LVGN…GIFF), 443-463 (LGGC…YWVL), 474-494 (FMLW…PIIM), and 521-541 (PIIF…YWVV).

It belongs to the OXA1/ALB3/YidC family. Type 1 subfamily. In terms of assembly, interacts with the Sec translocase complex via SecD. Specifically interacts with transmembrane segments of nascent integral membrane proteins during membrane integration.

It localises to the cell inner membrane. Its function is as follows. Required for the insertion and/or proper folding and/or complex formation of integral membrane proteins into the membrane. Involved in integration of membrane proteins that insert both dependently and independently of the Sec translocase complex, as well as at least some lipoproteins. Aids folding of multispanning membrane proteins. The chain is Membrane protein insertase YidC from Pseudomonas fluorescens (strain ATCC BAA-477 / NRRL B-23932 / Pf-5).